Reading from the N-terminus, the 160-residue chain is Cyclic pyranopterin monophosphate synthase (160 aa).

Substrate contacts are provided by residues 73–75 (LCH) and 110–111 (ME). Residue Asp-125 is part of the active site.

The protein belongs to the MoaC family. In terms of assembly, homohexamer; trimer of dimers.

The enzyme catalyses (8S)-3',8-cyclo-7,8-dihydroguanosine 5'-triphosphate = cyclic pyranopterin phosphate + diphosphate. It participates in cofactor biosynthesis; molybdopterin biosynthesis. In terms of biological role, catalyzes the conversion of (8S)-3',8-cyclo-7,8-dihydroguanosine 5'-triphosphate to cyclic pyranopterin monophosphate (cPMP). The chain is Cyclic pyranopterin monophosphate synthase from Pseudomonas aeruginosa (strain LESB58).